The following is a 192-amino-acid chain: Sarcoplasmic calcium-binding protein, alpha-B and -A chains (192 aa).

At Ala-1 the chain carries N-acetylalanine. 4 consecutive EF-hand domains span residues 4–39, 56–91, 100–135, and 136–171; these read WDNR…NTLI, IMRN…HCQG, AFKV…RSAF, and AEVK…YAQF. 14 residues coordinate Ca(2+): Asp-17, Asp-19, Asp-21, Asp-28, Asp-69, Asn-71, Asp-73, Glu-75, Glu-80, Asp-113, Asn-115, Asp-117, Lys-119, and Glu-124.

SCPs from crayfish, lobster, and shrimp are polymorphic dimers; three isotypes (alpha-alpha, alpha-beta, and beta-beta) have been identified.

Its function is as follows. Like parvalbumins, SCPs seem to be more abundant in fast contracting muscles, but no functional relationship can be established from this distribution. This chain is Sarcoplasmic calcium-binding protein, alpha-B and -A chains, found in Penaeus sp. (Penoeid shrimp).